A 372-amino-acid chain; its full sequence is Dof zinc finger protein DOF5.6 (372 aa).

The segment at 73 to 127 (QKCPRCESTHTKFCYYNNYSLSQPRYFCKTCRRYWTKGGTLRNIPVGGGCRKNKK) adopts a Dof-type zinc-finger fold. 4 residues coordinate Zn(2+): Cys-75, Cys-78, Cys-100, and Cys-103. The interval 117 to 146 (PVGGGCRKNKKPSSSNSSSSTSSGKKPSNI) is disordered. The segment covering 128–145 (PSSSNSSSSTSSGKKPSN) has biased composition (low complexity).

In terms of tissue distribution, the PEAR proteins (e.g. DOF2.4, DOF5.1, DOF3.2, DOF1.1, DOF5.6 and DOF5.3) form a short-range concentration gradient that peaks at protophloem sieve elements (PSE). Preferentially expressed in the vasculature of all organs, including seedlings, roots, stems, buds, leaves, flowers and siliques, and particularly in the cambium, phloem and interfascicular parenchyma cells of inflorescence stems.

Its subcellular location is the nucleus. In terms of biological role, transcription factor that binds specifically to a 5'-AA[AG]G-3' consensus core sequence. Promotes expression. The PEAR proteins (e.g. DOF2.4, DOF5.1, DOF3.2, DOF1.1, DOF5.6 and DOF5.3) activate gene expression that promotes radial growth of protophloem sieve elements. Involved in the regulation of interfascicular cambium formation and vascular tissue development, particularly at a very early stage during inflorescence stem development; promotes both cambium activity and phloem specification, but prevents xylem specification. This Arabidopsis thaliana (Mouse-ear cress) protein is Dof zinc finger protein DOF5.6.